The chain runs to 189 residues: Elongation factor P 2 (189 aa).

This sequence belongs to the elongation factor P family.

The protein localises to the cytoplasm. It functions in the pathway protein biosynthesis; polypeptide chain elongation. Functionally, involved in peptide bond synthesis. Stimulates efficient translation and peptide-bond synthesis on native or reconstituted 70S ribosomes in vitro. Probably functions indirectly by altering the affinity of the ribosome for aminoacyl-tRNA, thus increasing their reactivity as acceptors for peptidyl transferase. This Lactobacillus johnsonii (strain CNCM I-12250 / La1 / NCC 533) protein is Elongation factor P 2 (efp2).